The sequence spans 918 residues: Isoleucine--tRNA ligase 1 (918 aa).

A 'HIGH' region motif is present at residues 57–67; that stretch reads PYANGDIHIGH. Glutamate 553 serves as a coordination point for L-isoleucyl-5'-AMP. A 'KMSKS' region motif is present at residues 594-598; it reads KMSKS. Lysine 597 serves as a coordination point for ATP. 4 residues coordinate Zn(2+): cysteine 885, cysteine 888, cysteine 905, and cysteine 908.

This sequence belongs to the class-I aminoacyl-tRNA synthetase family. IleS type 1 subfamily. In terms of assembly, monomer. Zn(2+) serves as cofactor.

The protein resides in the cytoplasm. The enzyme catalyses tRNA(Ile) + L-isoleucine + ATP = L-isoleucyl-tRNA(Ile) + AMP + diphosphate. Functionally, catalyzes the attachment of isoleucine to tRNA(Ile). As IleRS can inadvertently accommodate and process structurally similar amino acids such as valine, to avoid such errors it has two additional distinct tRNA(Ile)-dependent editing activities. One activity is designated as 'pretransfer' editing and involves the hydrolysis of activated Val-AMP. The other activity is designated 'posttransfer' editing and involves deacylation of mischarged Val-tRNA(Ile). The protein is Isoleucine--tRNA ligase 1 of Oceanobacillus iheyensis (strain DSM 14371 / CIP 107618 / JCM 11309 / KCTC 3954 / HTE831).